The chain runs to 491 residues: Cobyric acid synthase (491 aa).

Residues 249 to 439 enclose the GATase cobBQ-type domain; sequence PIDIAVIKLP…IHGVFDGVEF (191 aa). C329 acts as the Nucleophile in catalysis. H431 is a catalytic residue.

The protein belongs to the CobB/CobQ family. CobQ subfamily.

The protein operates within cofactor biosynthesis; adenosylcobalamin biosynthesis. In terms of biological role, catalyzes amidations at positions B, D, E, and G on adenosylcobyrinic A,C-diamide. NH(2) groups are provided by glutamine, and one molecule of ATP is hydrogenolyzed for each amidation. The polypeptide is Cobyric acid synthase (Clostridium tetani (strain Massachusetts / E88)).